Reading from the N-terminus, the 41-residue chain is Chymotrypsin inhibitor (41 aa).

Functionally, inhibits chymotrypsin. The protein is Chymotrypsin inhibitor of Eisenia hortensis (European nightcrawler).